A 422-amino-acid chain; its full sequence is Interferon-induced protein 44 (422 aa).

One can recognise a TLDc domain in the interval 1 to 147 (MAMRTRLTWQ…IQECEAFRCE (147 aa)).

It belongs to the IFI44 family.

The protein resides in the cytoplasm. This protein aggregates to form microtubular structures. The polypeptide is Interferon-induced protein 44 (Ifi44) (Mus musculus (Mouse)).